The sequence spans 170 residues: Ubiquitin-conjugating enzyme E2 J2-like (170 aa).

Residues aspartate 15–tyrosine 165 form the UBC core domain. Residue cysteine 97 is the Glycyl thioester intermediate of the active site.

This sequence belongs to the ubiquitin-conjugating enzyme family.

It catalyses the reaction S-ubiquitinyl-[E1 ubiquitin-activating enzyme]-L-cysteine + [E2 ubiquitin-conjugating enzyme]-L-cysteine = [E1 ubiquitin-activating enzyme]-L-cysteine + S-ubiquitinyl-[E2 ubiquitin-conjugating enzyme]-L-cysteine.. The protein operates within protein modification; protein ubiquitination. Its function is as follows. Catalyzes the covalent attachment of ubiquitin to other proteins. The polypeptide is Ubiquitin-conjugating enzyme E2 J2-like (Dictyostelium discoideum (Social amoeba)).